The chain runs to 132 residues: MSLSDPLGDMLTRIRNAQRARHAACVAPASKLRANVLEALRREGYIRGYAQEDLRKGVAQLRIELKYLDGEPVIKEIHRVSKPGRRVYSKIKELPRVYAGLGVSILSTPRGVLSDAEARAANVGGEVLCRVF.

This sequence belongs to the universal ribosomal protein uS8 family. Part of the 30S ribosomal subunit. Contacts proteins S5 and S12.

One of the primary rRNA binding proteins, it binds directly to 16S rRNA central domain where it helps coordinate assembly of the platform of the 30S subunit. This Gluconacetobacter diazotrophicus (strain ATCC 49037 / DSM 5601 / CCUG 37298 / CIP 103539 / LMG 7603 / PAl5) protein is Small ribosomal subunit protein uS8.